A 192-amino-acid polypeptide reads, in one-letter code: Sporulation initiation phosphotransferase B (192 aa).

The residue at position 30 (His30) is a Phosphohistidine.

In terms of assembly, homodimer. Dimerization is essential for activity as both monomers contribute to the formation of the active site. Phosphorylated by spo0F.

The protein localises to the cytoplasm. In terms of biological role, key element in the phosphorelay regulating sporulation initiation. Acts on spo0A. Mediates reversible phosphoryl transfer from spo0F to spo0A. In Bacillus subtilis (strain 168), this protein is Sporulation initiation phosphotransferase B (spo0B).